Consider the following 554-residue polypeptide: uncharacterized protein (554 aa).

Residues D327 and N328 each contribute to the Ca(2+) site.

It belongs to the sulfatase family. Ca(2+) is required as a cofactor.

It is found in the cytoplasm. The protein resides in the nucleus. This is an uncharacterized protein from Schizosaccharomyces pombe (strain 972 / ATCC 24843) (Fission yeast).